A 1471-amino-acid polypeptide reads, in one-letter code: Myosin-51 (1471 aa).

The 55-residue stretch at 7–61 (SVGSECWVSNNNGHWDAARLIEIKDNGGGKVVATVAKSSGVLETVNYQQLQNRNI) folds into the Myosin N-terminal SH3-like domain. Residues 65–749 (ESPSDLTNLP…VIGNFEEAHR (685 aa)) form the Myosin motor domain. Residue 159–166 (GESGAGKT) coordinates ATP. Residues 628 to 650 (LSQLMTTVSSTNVHYIRCIKPNE) are actin-binding. IQ domains follow at residues 753–773 (SKST…KEYQ), 776–796 (VKFI…QRFE), 801–821 (ERAA…KRYL), 824–844 (IKCA…SRYI), 849–869 (ESSA…KTFR), and 872–892 (KKSV…RYLR). Residues 909 to 952 (KNLQASITEVSKQLKSNSKKVTVLRNKLNILNNSLSKWKCLIKK) are a coiled coil. Positions 1171-1417 (EKPLQAVLYW…SKAVEALSCK (247 aa)) constitute a Dilute domain.

Belongs to the TRAFAC class myosin-kinesin ATPase superfamily. Myosin family.

The protein resides in the cytoplasm. In terms of biological role, involved in cytokinesis. In Schizosaccharomyces pombe (strain 972 / ATCC 24843) (Fission yeast), this protein is Myosin-51 (myo51).